A 995-amino-acid chain; its full sequence is uncharacterized protein (995 aa).

The N-terminal stretch at 1–30 (MFIHRMKSNLASLFLSFFLLLACEFTFSYA) is a signal peptide. 6 N-linked (GlcNAc...) asparagine glycosylation sites follow: N115, N162, N225, N422, N478, and N486. E502 is a catalytic residue. N546 and N611 each carry an N-linked (GlcNAc...) asparagine glycan. The active-site Proton donor is the D669. Residues N670, N823, N843, and N986 are each glycosylated (N-linked (GlcNAc...) asparagine).

This sequence belongs to the glycosyl hydrolase 31 family.

Its subcellular location is the spore wall. This is an uncharacterized protein from Schizosaccharomyces pombe (strain 972 / ATCC 24843) (Fission yeast).